The primary structure comprises 397 residues: FAD-dependent monooxygenase trt8 (397 aa).

Tyrosine 53 is a catalytic residue. Residues aspartate 145 and alanine 158 each coordinate FAD.

The protein belongs to the paxM FAD-dependent monooxygenase family. Requires FAD as cofactor.

The protein operates within secondary metabolite biosynthesis; terpenoid biosynthesis. Its function is as follows. FAD-dependent monooxygenase; part of the gene cluster that mediates the biosynthesis of terretonin, a fungal meroterpenoid that acts as a mycotoxin. The first step of the pathway is the synthesis of 3,5-dimethylorsellinic acid (DMOA) by the polyketide synthase trt4. DMOA is then prenylated into farnesyl-DMOA by the polyprenyl transferase trt2. Methylation by the methyltransferase trt5 then leads to farnesyl-DMOA methyl ester which is further subject to epoxidation by the FAD-dependent monooxygenase trt8 to yield epoxyfarnesyl-DMOA methyl ester. Cyclization of epoxyfarnesyl-DMOA methyl ester by the terpene cyclase trt1 leads to a tetracycle intermediate which is in turn converted to preterretonin. Dehydrogenase trt9 comes next to transform preterretonin to preterrenoid. The FAD-dependent monooxygenase trt3 is then required for the C-hydroxylation at C16 of preterrenoid to yield terrenoid. The cytochrome P450 trt6 catalyzes three successive oxidations to transform terrenoid into an unstable intermediate, which then undergoes the D-ring expansion and unusual rearrangement of the methoxy group to afford the core skeleton of terretonin. Trt14 catalyzes the D-ring expansion of terretonin involving intramolecular methoxy rearrangement as well as the hydrolysis of the expanded D-ring and the methyl ester moiety. Finally, the nonheme iron-dependent dioxygenase trt7 accomplishes the last two oxidation reactions steps to complete the biosynthesis of terretonin. Terretonin C is produced via spontaneous decarboxylation of the terretonin precursor. Another shunt product of the terretonin biosynthesis is dihydrofarnesyl-DMOA, derived from epoxyfarnesyl-DMOA through hydrolysis of the epoxide. This is FAD-dependent monooxygenase trt8 from Aspergillus terreus (strain NIH 2624 / FGSC A1156).